Consider the following 180-residue polypeptide: Large ribosomal subunit protein uL5 (180 aa).

It belongs to the universal ribosomal protein uL5 family. Part of the 50S ribosomal subunit; part of the 5S rRNA/L5/L18/L25 subcomplex. Contacts the 5S rRNA and the P site tRNA. Forms a bridge to the 30S subunit in the 70S ribosome.

In terms of biological role, this is one of the proteins that bind and probably mediate the attachment of the 5S RNA into the large ribosomal subunit, where it forms part of the central protuberance. In the 70S ribosome it contacts protein S13 of the 30S subunit (bridge B1b), connecting the 2 subunits; this bridge is implicated in subunit movement. Contacts the P site tRNA; the 5S rRNA and some of its associated proteins might help stabilize positioning of ribosome-bound tRNAs. The protein is Large ribosomal subunit protein uL5 of Lactobacillus johnsonii (strain CNCM I-12250 / La1 / NCC 533).